The primary structure comprises 271 residues: Calretinin (271 aa).

6 EF-hand domains span residues 16–51 (LTASQFLEIWKHFDADGNGYIEGKELENFFQELEKA), 63–98 (NFGEKMKEFMQKYDKNSDGKIEMAELAQILPTEENF), 107–142 (GSSAEFMEAWRKYDTDRSGYIEANELKGFLSDLLKK), 151–186 (KLQEYTQTILRMFDLNGDGKLGLSEMSRLLPVQENF), 195–230 (LTSEEFNAIFTFYDKDGSGYIDENELDALLKDLYEK), and 235–270 (MNIQQLTTYRKSVMSLAEAGKLYRKDLEIVLCSEPP). The Ca(2+) site is built by Asp-29, Asp-31, Asn-33, Tyr-35, Glu-40, Asp-76, Asn-78, Asp-80, Lys-82, Glu-87, Asp-120, Asp-122, Ser-124, Tyr-126, Glu-131, Asp-164, Asn-166, Asp-168, Lys-170, Glu-175, Asp-208, Asp-210, Ser-212, Tyr-214, and Glu-219. The residue at position 214 (Tyr-214) is a Phosphotyrosine.

The protein belongs to the calbindin family. As to expression, widely expressed in central nervous system. Expressed in type I unipolar brush cells of the cerebellum (at protein level).

The protein localises to the synapse. The protein resides in the cell projection. Its subcellular location is the dendrite. Its function is as follows. Calcium-binding protein involved in calcium homeostasis and signal transduction. It plays a critical role in buffering intracellular calcium levels and modulating calcium-dependent signaling pathways. Predominantly expressed in specific neuronal populations, influences synaptic plasticity and neuronal excitability, contributing to learning and memory. During embryonic development, it facilitates neuronal differentiation and maturation. This Mus musculus (Mouse) protein is Calretinin (Calb2).